The sequence spans 500 residues: Na(+)/H(+) antiporter NhaB (500 aa).

The next 11 helical transmembrane spans lie at 23-43 (VVIC…GPVA), 53-73 (IFTL…LLLI), 96-116 (VILL…LLLF), 129-149 (AILA…LDAL), 150-170 (TVTA…HRVA), 205-225 (LLMH…VGEP), 238-258 (FVDF…AGLV), 311-331 (ILII…LMVI), 350-370 (FQDA…VAVI), 450-470 (ATPN…APLI), and 477-497 (MVWM…WAVT).

Belongs to the NhaB Na(+)/H(+) (TC 2.A.34) antiporter family.

It is found in the cell inner membrane. It catalyses the reaction 2 Na(+)(in) + 3 H(+)(out) = 2 Na(+)(out) + 3 H(+)(in). Na(+)/H(+) antiporter that extrudes sodium in exchange for external protons. The sequence is that of Na(+)/H(+) antiporter NhaB from Pseudomonas putida (strain ATCC 47054 / DSM 6125 / CFBP 8728 / NCIMB 11950 / KT2440).